Reading from the N-terminus, the 317-residue chain is Glycine--tRNA ligase alpha subunit (317 aa).

It belongs to the class-II aminoacyl-tRNA synthetase family. In terms of assembly, tetramer of two alpha and two beta subunits.

The protein localises to the cytoplasm. It carries out the reaction tRNA(Gly) + glycine + ATP = glycyl-tRNA(Gly) + AMP + diphosphate. The chain is Glycine--tRNA ligase alpha subunit from Pseudomonas fluorescens (strain SBW25).